The following is a 467-amino-acid chain: ATP synthase subunit beta (467 aa).

G150–T157 is an ATP binding site.

It belongs to the ATPase alpha/beta chains family. As to quaternary structure, F-type ATPases have 2 components, CF(1) - the catalytic core - and CF(0) - the membrane proton channel. CF(1) has five subunits: alpha(3), beta(3), gamma(1), delta(1), epsilon(1). CF(0) has three main subunits: a(1), b(2) and c(9-12). The alpha and beta chains form an alternating ring which encloses part of the gamma chain. CF(1) is attached to CF(0) by a central stalk formed by the gamma and epsilon chains, while a peripheral stalk is formed by the delta and b chains.

The protein resides in the cell inner membrane. It carries out the reaction ATP + H2O + 4 H(+)(in) = ADP + phosphate + 5 H(+)(out). Functionally, produces ATP from ADP in the presence of a proton gradient across the membrane. The catalytic sites are hosted primarily by the beta subunits. This is ATP synthase subunit beta from Aliivibrio salmonicida (strain LFI1238) (Vibrio salmonicida (strain LFI1238)).